The sequence spans 28 residues: Phospholipase A2 pseudexin C chain (28 aa).

Tyrosine 28 provides a ligand contact to Ca(2+).

This sequence belongs to the phospholipase A2 family. Group I subfamily. Requires Ca(2+) as cofactor. As to expression, expressed by the venom gland.

It is found in the secreted. The catalysed reaction is a 1,2-diacyl-sn-glycero-3-phosphocholine + H2O = a 1-acyl-sn-glycero-3-phosphocholine + a fatty acid + H(+). In terms of biological role, PLA2 catalyzes the calcium-dependent hydrolysis of the 2-acyl groups in 3-sn-phosphoglycerides. The protein is Phospholipase A2 pseudexin C chain of Pseudechis porphyriacus (Red-bellied black snake).